Consider the following 944-residue polypeptide: Translation initiation factor IF-2 (944 aa).

Over residues 55–81 (LTGQAAAPAAAPSSAPRPGARSSAPKP) the composition is skewed to low complexity. Residues 55-329 (LTGQAAAPAA…RTKRAEFELR (275 aa)) form a disordered region. A compositionally biased stretch (pro residues) spans 82–92 (GGRPTPGPQPT). Over residues 93–107 (AAPEVEAPEASDVPV) the composition is skewed to low complexity. Over residues 123-135 (ASRKAAAEEKAQA) the composition is skewed to basic and acidic residues. 2 stretches are compositionally biased toward low complexity: residues 136–153 (EKSAASATPDAPAAETPS) and 211–222 (GQRPAAGAAGPR). Residues 223 to 236 (PAAPRPGSPRPGAP) are compositionally biased toward pro residues. Over residues 244–257 (GARPAGFGQRPAGA) the composition is skewed to low complexity. The segment covering 258–269 (GRPGGAPGGAGR) has biased composition (gly residues). A compositionally biased stretch (low complexity) spans 270–283 (PGAPAAGGFQRPAG). Gly residues predominate over residues 284 to 310 (GFAGRPGGGGRGRGPGGGTAGAFGRGG). A compositionally biased stretch (basic residues) spans 311-322 (GKSKSRKSKRTK). Positions 437-611 (IRPPVVTVMG…LTADAGLDLR (175 aa)) constitute a tr-type G domain. Positions 446 to 453 (GHVDHGKT) are G1. A GTP-binding site is contributed by 446–453 (GHVDHGKT). A G2 region spans residues 471-475 (GITQH). A G3 region spans residues 496–499 (DTPG). GTP-binding positions include 496–500 (DTPGH) and 550–553 (NKVD). Residues 550 to 553 (NKVD) form a G4 region. Residues 586-588 (SAL) are G5.

It belongs to the TRAFAC class translation factor GTPase superfamily. Classic translation factor GTPase family. IF-2 subfamily.

Its subcellular location is the cytoplasm. One of the essential components for the initiation of protein synthesis. Protects formylmethionyl-tRNA from spontaneous hydrolysis and promotes its binding to the 30S ribosomal subunits. Also involved in the hydrolysis of GTP during the formation of the 70S ribosomal complex. The polypeptide is Translation initiation factor IF-2 (Clavibacter michiganensis subsp. michiganensis (strain NCPPB 382)).